Here is a 332-residue protein sequence, read N- to C-terminus: Protein EXORDIUM-like 6 (332 aa).

An N-terminal signal peptide occupies residues Met1–Ser27. Asn36, Asn102, and Asn143 each carry an N-linked (GlcNAc...) asparagine glycan.

The protein belongs to the EXORDIUM family.

It localises to the secreted. The protein localises to the extracellular space. The protein resides in the apoplast. May play a role in a brassinosteroid-dependent regulation of growth and development. This Arabidopsis thaliana (Mouse-ear cress) protein is Protein EXORDIUM-like 6 (EXL6).